The primary structure comprises 404 residues: Argininosuccinate synthase (404 aa).

Residues 10 to 18 (AYSGGLDTS) and Ala-37 contribute to the ATP site. Residues Tyr-90 and Ser-95 each contribute to the L-citrulline site. Residue Gly-120 participates in ATP binding. L-aspartate-binding residues include Thr-122, Asn-126, and Asp-127. Asn-126 lines the L-citrulline pocket. L-citrulline-binding residues include Arg-130, Ser-181, Ser-190, Glu-266, and Tyr-278.

The protein belongs to the argininosuccinate synthase family. Type 1 subfamily. As to quaternary structure, homotetramer.

Its subcellular location is the cytoplasm. The catalysed reaction is L-citrulline + L-aspartate + ATP = 2-(N(omega)-L-arginino)succinate + AMP + diphosphate + H(+). It functions in the pathway amino-acid biosynthesis; L-arginine biosynthesis; L-arginine from L-ornithine and carbamoyl phosphate: step 2/3. This is Argininosuccinate synthase from Erythrobacter litoralis (strain HTCC2594).